The following is a 211-amino-acid chain: Large ribosomal subunit protein uL3 (211 aa).

Polar residues predominate over residues 130-139; the sequence is QDATHGNSLS. Positions 130–151 are disordered; sequence QDATHGNSLSHRAPGSIGQNQT. Residue Gln150 is modified to N5-methylglutamine.

The protein belongs to the universal ribosomal protein uL3 family. In terms of assembly, part of the 50S ribosomal subunit. Forms a cluster with proteins L14 and L19. In terms of processing, methylated by PrmB.

In terms of biological role, one of the primary rRNA binding proteins, it binds directly near the 3'-end of the 23S rRNA, where it nucleates assembly of the 50S subunit. The protein is Large ribosomal subunit protein uL3 of Alcanivorax borkumensis (strain ATCC 700651 / DSM 11573 / NCIMB 13689 / SK2).